We begin with the raw amino-acid sequence, 625 residues long: tRNA uridine 5-carboxymethylaminomethyl modification enzyme MnmG (625 aa).

FAD-binding positions include 13-18 (GGGHAG), V125, and S182. 276-290 (GPRYCPSIEDKITRF) serves as a coordination point for NAD(+). Q373 serves as a coordination point for FAD.

This sequence belongs to the MnmG family. In terms of assembly, homodimer. Heterotetramer of two MnmE and two MnmG subunits. FAD serves as cofactor.

The protein localises to the cytoplasm. In terms of biological role, NAD-binding protein involved in the addition of a carboxymethylaminomethyl (cmnm) group at the wobble position (U34) of certain tRNAs, forming tRNA-cmnm(5)s(2)U34. This Lactococcus lactis subsp. lactis (strain IL1403) (Streptococcus lactis) protein is tRNA uridine 5-carboxymethylaminomethyl modification enzyme MnmG.